The chain runs to 116 residues: Orphan antitoxin YagB (116 aa).

This sequence belongs to the CbeA/YafW/YfjZ antitoxin family.

Its function is as follows. Putative antitoxin component of a type IV toxin-antitoxin (TA) system; its cognate toxin is unknown. The protein is Orphan antitoxin YagB (yagB) of Escherichia coli (strain K12).